Consider the following 316-residue polypeptide: Mitochondrial GTPase 1 (316 aa).

The 176-residue stretch at 28 to 203 folds into the CP-type G domain; that stretch reads MKQMQQKLKQ…LLDTPGILKP (176 aa). Residues 73–76, 147–152, and Gly199 contribute to the GTP site; these read NKKD and NVGKSS.

It belongs to the TRAFAC class YlqF/YawG GTPase family. MTG1 subfamily.

The protein localises to the mitochondrion inner membrane. In terms of biological role, plays a role in the regulation of the mitochondrial ribosome assembly and of translational activity. Displays mitochondrial GTPase activity. The protein is Mitochondrial GTPase 1 of Aedes aegypti (Yellowfever mosquito).